Consider the following 208-residue polypeptide: Probable adenylyl-sulfate kinase (208 aa).

38–45 (GLSGSGKS) is a binding site for ATP. Catalysis depends on serine 112, which acts as the Phosphoserine intermediate.

It belongs to the APS kinase family.

It catalyses the reaction adenosine 5'-phosphosulfate + ATP = 3'-phosphoadenylyl sulfate + ADP + H(+). It participates in sulfur metabolism; hydrogen sulfide biosynthesis; sulfite from sulfate: step 2/3. Functionally, catalyzes the synthesis of activated sulfate. This Halalkalibacterium halodurans (strain ATCC BAA-125 / DSM 18197 / FERM 7344 / JCM 9153 / C-125) (Bacillus halodurans) protein is Probable adenylyl-sulfate kinase.